The chain runs to 371 residues: Putative RING finger protein ORF117 (371 aa).

The RING-type zinc-finger motif lies at 72 to 108 (CCICFRKDVIYKEVPCGHYICVECYKEPIRNVCPECN). Acidic residues predominate over residues 178–192 (EEEMNESEAEEEEPV). The disordered stretch occupies residues 178–218 (EEEMNESEAEEEEPVPEIAQFEALNTPPPPPTNRRPKIRRP).

In Magallana gigas (Pacific oyster), this protein is Putative RING finger protein ORF117.